Reading from the N-terminus, the 172-residue chain is Zinc finger C2HC domain-containing protein 1B (172 aa).

2 consecutive C2HC/C3H-type zinc fingers follow at residues 14–43 (KLFPCEVCGRCFATDVLERHGPICKKVFNK) and 117–146 (DYIQCPYCMRRFNETAAQRHINFCKNQTSR). C18, C21, H33, C37, C121, C124, H136, and C140 together coordinate Zn(2+).

Belongs to the ZC2HC1 family. It depends on Zn(2+) as a cofactor.

This Mus musculus (Mouse) protein is Zinc finger C2HC domain-containing protein 1B (Zc2hc1b).